The following is a 273-amino-acid chain: Undecaprenyl-diphosphatase (273 aa).

8 helical membrane passes run 7–27, 45–65, 89–109, 115–135, 152–171, 189–209, 221–241, and 253–273; these read LWIA…PVSS, AETF…VMFW, LTLI…LLLH, LFNP…LIAA, TYRQ…WPGF, YAAS…ATGL, ADFP…LIAI, and FIPF…LFVL.

Belongs to the UppP family.

Its subcellular location is the cell inner membrane. The catalysed reaction is di-trans,octa-cis-undecaprenyl diphosphate + H2O = di-trans,octa-cis-undecaprenyl phosphate + phosphate + H(+). Its function is as follows. Catalyzes the dephosphorylation of undecaprenyl diphosphate (UPP). Confers resistance to bacitracin. In Erwinia tasmaniensis (strain DSM 17950 / CFBP 7177 / CIP 109463 / NCPPB 4357 / Et1/99), this protein is Undecaprenyl-diphosphatase.